Here is a 342-residue protein sequence, read N- to C-terminus: Leucine-rich repeat-containing protein 23 (342 aa).

Residues 1-30 (MSDEDDLEDFETDQDDLEREDDEKETEEWE) show a composition bias toward acidic residues. Residues 1-42 (MSDEDDLEDFETDQDDLEREDDEKETEEWEDYRKEGEESEDW) are disordered. The stretch at 3-27 (DEDDLEDFETDQDDLEREDDEKETE) forms a coiled coil. LRR repeat units follow at residues 91 to 112 (HLRY…NHLT), 113 to 133 (NLLW…NELP), 134 to 154 (YLQI…ISHP), 155 to 176 (RLAS…DPQK), 179 to 199 (SLHT…INLP), 200 to 221 (KLKN…ENLS), 222 to 243 (NLTT…SKEM), and 245 to 266 (SLQY…AKLR). The interval 207–342 (AQNMLKKVEG…PESELDQSST (136 aa)) is interaction with RSPH9. Residues 279–317 (NPCTDENDYRQEALVQIAHLERLDKEFYEEEERAEADEI) enclose the LRRCT domain. A coiled-coil region spans residues 306-332 (YEEEERAEADEIRQRMKEEQEQEAEVE). A disordered region spans residues 307–342 (EEEERAEADEIRQRMKEEQEQEAEVEPESELDQSST). A compositionally biased stretch (basic and acidic residues) spans 314–324 (ADEIRQRMKEE). Over residues 325-342 (QEQEAEVEPESELDQSST) the composition is skewed to acidic residues.

As to quaternary structure, component of the axonemal radial spoke complex. Interacts with RSPH3. Interacts with RSPH9.

Its subcellular location is the cytoplasm. The protein localises to the cytoskeleton. The protein resides in the flagellum axoneme. Its function is as follows. Essential for sperm motility and male fertility. Plays an important role in the proper assembly of the third radial spoke (RS3) head and the bridge structure between RS2 and RS3 in the sperm flagella. In Bos taurus (Bovine), this protein is Leucine-rich repeat-containing protein 23 (LRRC23).